We begin with the raw amino-acid sequence, 210 residues long: Cancer/testis antigen 2 (210 aa).

Gly residues-rich tracts occupy residues 1–47 (MQAE…GPRG) and 56–66 (PRGGAPRGPHG). Disordered stretches follow at residues 1–80 (MQAE…PCGA) and 154–197 (GLGS…DGCR). Residues 163–177 (QKARDLRTPKHKVSE) are compositionally biased toward basic and acidic residues.

The protein belongs to the CTAG/PCC1 family. Testis and very low level in placenta and in some uterus samples. Observed in 25-50% of tumor samples of melanomas, non-small-cell lung carcinomas, bladder, prostate and head and neck cancers.

The protein is Cancer/testis antigen 2 (CTAG2) of Homo sapiens (Human).